A 267-amino-acid polypeptide reads, in one-letter code: tRNA pseudouridine synthase A (267 aa).

Asp51 (nucleophile) is an active-site residue. Tyr109 serves as a coordination point for substrate.

The protein belongs to the tRNA pseudouridine synthase TruA family. As to quaternary structure, homodimer.

It carries out the reaction uridine(38/39/40) in tRNA = pseudouridine(38/39/40) in tRNA. Functionally, formation of pseudouridine at positions 38, 39 and 40 in the anticodon stem and loop of transfer RNAs. This is tRNA pseudouridine synthase A from Staphylococcus epidermidis (strain ATCC 12228 / FDA PCI 1200).